The chain runs to 729 residues: Transient receptor potential cation channel subfamily V member 5 (729 aa).

Topologically, residues 1-327 (MGGFLPKAEG…SFKWNKYGRP (327 aa)) are cytoplasmic. ANK repeat units follow at residues 44 to 74 (ILESPLLRASKENDLSVLRQLLLDCTCDVRQ), 78 to 107 (LGETALHIAALYDNLEAALVLMEAAPELVF), 116 to 145 (AGQTALHIAVVNQNVNLVRALLTRRASVSA), 162 to 191 (FGEHPLSFAACVNSEEIVRLLIEHGADIRA), 195 to 228 (LGNTVLHILILQPNKTFACQMYNLLLSYDGHGDH), and 239 to 268 (QGLTPFKLAGVEGNTVMFQHLMQKRRHIQW). The chain crosses the membrane as a helical span at residues 328 to 348 (YFCILAALYLLYMICFTTCCV). Topologically, residues 349-385 (YRPLKFRGGNRTHSRDITILQQKLLQEAYETREDIIR) are extracellular. Asparagine 358 is a glycosylation site (N-linked (GlcNAc...) asparagine). The chain crosses the membrane as a helical span at residues 386-408 (LVGELVSIVGAVIILLLEIPDIF). The Cytoplasmic segment spans residues 409 to 419 (RVGASRYFGKT). Residues 420–442 (ILGGPFHVIIITYASLVLVTMVM) form a helical membrane-spanning segment. At 443 to 448 (RLTNTN) the chain is on the extracellular side. A helical membrane pass occupies residues 449–469 (GEVVPMSFALVLGWCSVMYFT). Over 470–492 (RGFQMLGPFTIMIQKMIFGDLMR) the chain is Cytoplasmic. Residues 493 to 513 (FCWLMAVVILGFASAFYIIFQ) traverse the membrane as a helical segment. The pore-forming intramembrane region spans 524–544 (YDYPMALFTTFELFLTVIDAP). A Ca(2+)-binding site is contributed by aspartate 542. A helical membrane pass occupies residues 557-577 (IVNFAFTIIATLLMLNLFIAM). At 578 to 729 (MGDTHWRVAQ…EGDGEEVYHF (152 aa)) the chain is on the cytoplasmic side. The interval 598–602 (VATTV) is interaction with S100A10. An involved in Ca(2+)-dependent inactivation region spans residues 650-653 (VFKN). Residues 654–665 (SDKEDDQEHPSE) show a composition bias toward basic and acidic residues. The tract at residues 654–675 (SDKEDDQEHPSEKQPSGAESGT) is disordered. Threonine 685 bears the Phosphothreonine mark. Serine 689 bears the Phosphoserine mark. Residues 700–729 (GWEILRQNTLGHLNLGLNLSEGDGEEVYHF) are involved in Ca(2+)-dependent inactivation.

This sequence belongs to the transient receptor (TC 1.A.4) family. TrpV subfamily. TRPV5 sub-subfamily. As to quaternary structure, homotetramer and probably heterotetramer with TRPV6. Interacts with TRPV6. Interacts with S100A10 and probably with the ANAX2-S100A10 heterotetramer. The interaction with S100A10 is required for the trafficking to the plasma membrane. Interacts with calmodulin. Interacts with BSPRY, which results in its inactivation. Glycosylated. Expressed at high levels in kidney, small intestine and pancreas, and at lower levels in testis, prostate, placenta, brain, colon and rectum.

The protein localises to the apical cell membrane. The catalysed reaction is Ca(2+)(in) = Ca(2+)(out). With respect to regulation, activated by WNK3. In terms of biological role, constitutively active calcium selective cation channel thought to be involved in Ca(2+) reabsorption in kidney and intestine. Required for normal Ca(2+) reabsorption in the kidney distal convoluted tubules. The channel is activated by low internal calcium level and the current exhibits an inward rectification. A Ca(2+)-dependent feedback regulation includes fast channel inactivation and slow current decay. Heteromeric assembly with TRPV6 seems to modify channel properties. TRPV5-TRPV6 heteromultimeric concatemers exhibit voltage-dependent gating. The polypeptide is Transient receptor potential cation channel subfamily V member 5 (TRPV5) (Homo sapiens (Human)).